The sequence spans 356 residues: tRNA N6-adenosine threonylcarbamoyltransferase (356 aa).

2 residues coordinate Fe cation: histidine 114 and histidine 118. Residues 136 to 140 (LVSGG), aspartate 169, glycine 182, and asparagine 280 each bind substrate. Position 308 (aspartate 308) interacts with Fe cation. A disordered region spans residues 333–356 (ARPRWPLDNSQPALLGSGKKGAKA).

The protein belongs to the KAE1 / TsaD family. Fe(2+) serves as cofactor.

The protein resides in the cytoplasm. The catalysed reaction is L-threonylcarbamoyladenylate + adenosine(37) in tRNA = N(6)-L-threonylcarbamoyladenosine(37) in tRNA + AMP + H(+). Required for the formation of a threonylcarbamoyl group on adenosine at position 37 (t(6)A37) in tRNAs that read codons beginning with adenine. Is involved in the transfer of the threonylcarbamoyl moiety of threonylcarbamoyl-AMP (TC-AMP) to the N6 group of A37, together with TsaE and TsaB. TsaD likely plays a direct catalytic role in this reaction. This chain is tRNA N6-adenosine threonylcarbamoyltransferase, found in Dinoroseobacter shibae (strain DSM 16493 / NCIMB 14021 / DFL 12).